Reading from the N-terminus, the 168-residue chain is Protein GrpE (168 aa).

This sequence belongs to the GrpE family. In terms of assembly, homodimer.

The protein localises to the cytoplasm. In terms of biological role, participates actively in the response to hyperosmotic and heat shock by preventing the aggregation of stress-denatured proteins, in association with DnaK and GrpE. It is the nucleotide exchange factor for DnaK and may function as a thermosensor. Unfolded proteins bind initially to DnaJ; upon interaction with the DnaJ-bound protein, DnaK hydrolyzes its bound ATP, resulting in the formation of a stable complex. GrpE releases ADP from DnaK; ATP binding to DnaK triggers the release of the substrate protein, thus completing the reaction cycle. Several rounds of ATP-dependent interactions between DnaJ, DnaK and GrpE are required for fully efficient folding. This chain is Protein GrpE, found in Thermotoga neapolitana (strain ATCC 49049 / DSM 4359 / NBRC 107923 / NS-E).